The following is a 793-amino-acid chain: Serine/threonine-protein phosphatase BSU1 (793 aa).

Kelch repeat units lie at residues 53 to 109 (STTA…LYGT), 110 to 160 (LILI…IAAQ), 214 to 262 (IFLL…VFGG), 264 to 314 (KLHV…NQYQ), and 329 to 388 (HLYV…EASS). A phosphoserine mark is found at serine 395 and serine 444. Residues aspartate 510, histidine 512, aspartate 544, and asparagine 576 each contribute to the Mn(2+) site. Residue histidine 577 is the Proton donor of the active site. Positions 629 and 707 each coordinate Mn(2+). Serine 764 carries the phosphoserine modification.

The protein belongs to the PPP phosphatase family. BSU subfamily. Interacts with CDG1, CDL1 and ASK7/BIN2. The cofactor is Mn(2+). In terms of processing, phosphorylated at Ser-395 and Ser-444. Phosphorylated at Ser-764 by CDG1 and CDL1. In terms of tissue distribution, mainly expressed in young, elongating tissues. In young seedlings, it is expressed at the base of the hypocotyl, at the tip and most peripheral cell layers of cotyledons, and in the vascular cylinder of roots, particularly in the elongation zone and at the point of emergence of lateral roots. In mature plants, it is still present in the root vasculature, but almost completely absent in fully expanded stems and leaves. In flowers, it is mainly expressed in sepal veins, anther filaments, and in the style, suggesting that BSU1 is expressed in actively growing regions and apparently enriched in vascular tissues.

The protein resides in the nucleus. It carries out the reaction O-phospho-L-seryl-[protein] + H2O = L-seryl-[protein] + phosphate. The catalysed reaction is O-phospho-L-threonyl-[protein] + H2O = L-threonyl-[protein] + phosphate. Its activity is regulated as follows. Activated by phosphorylation at Ser-764 by CDG1. Phosphatase that acts as a positive regulator of brassinosteroid (BR) signaling. Dephosphorylates BES1, a transcription factor that regulates the expression of BR-response genes, thereby playing an important role in the regulation of response to BRs. Inactivates the negative regulator of BR signaling ASK7/BIN2 by dephosphorylation at 'Tyr-200'. This Arabidopsis thaliana (Mouse-ear cress) protein is Serine/threonine-protein phosphatase BSU1 (BSU1).